A 432-amino-acid chain; its full sequence is Glutamyl-tRNA reductase (432 aa).

Residues 49 to 52 (TCNR), serine 107, 112 to 114 (ETQ), and glutamine 118 contribute to the substrate site. Cysteine 50 acts as the Nucleophile in catalysis. 186 to 191 (GAGEMG) lines the NADP(+) pocket.

It belongs to the glutamyl-tRNA reductase family. In terms of assembly, homodimer.

It catalyses the reaction (S)-4-amino-5-oxopentanoate + tRNA(Glu) + NADP(+) = L-glutamyl-tRNA(Glu) + NADPH + H(+). It functions in the pathway porphyrin-containing compound metabolism; protoporphyrin-IX biosynthesis; 5-aminolevulinate from L-glutamyl-tRNA(Glu): step 1/2. Catalyzes the NADPH-dependent reduction of glutamyl-tRNA(Glu) to glutamate 1-semialdehyde (GSA). The protein is Glutamyl-tRNA reductase of Campylobacter jejuni (strain RM1221).